The sequence spans 227 residues: Venom allergen 5 (227 aa).

A signal peptide spans 1–23; sequence MEISGLVYLIIIVTIIDLPYGKA. 4 disulfide bridges follow: Cys-27/Cys-40, Cys-31/Cys-124, Cys-49/Cys-117, and Cys-193/Cys-210. The SCP domain maps to 68-212; it reads LKEHNDFRQK…WHYHYLVCNY (145 aa).

It belongs to the CRISP family. Venom allergen 5-like subfamily. Expressed by the venom gland.

It is found in the secreted. This is Venom allergen 5 from Vespula maculifrons (Eastern yellow jacket).